We begin with the raw amino-acid sequence, 473 residues long: Aspartyl/glutamyl-tRNA(Asn/Gln) amidotransferase subunit B (473 aa).

It belongs to the GatB/GatE family. GatB subfamily. In terms of assembly, heterotrimer of A, B and C subunits.

The catalysed reaction is L-glutamyl-tRNA(Gln) + L-glutamine + ATP + H2O = L-glutaminyl-tRNA(Gln) + L-glutamate + ADP + phosphate + H(+). The enzyme catalyses L-aspartyl-tRNA(Asn) + L-glutamine + ATP + H2O = L-asparaginyl-tRNA(Asn) + L-glutamate + ADP + phosphate + 2 H(+). Functionally, allows the formation of correctly charged Asn-tRNA(Asn) or Gln-tRNA(Gln) through the transamidation of misacylated Asp-tRNA(Asn) or Glu-tRNA(Gln) in organisms which lack either or both of asparaginyl-tRNA or glutaminyl-tRNA synthetases. The reaction takes place in the presence of glutamine and ATP through an activated phospho-Asp-tRNA(Asn) or phospho-Glu-tRNA(Gln). In Methanococcoides burtonii (strain DSM 6242 / NBRC 107633 / OCM 468 / ACE-M), this protein is Aspartyl/glutamyl-tRNA(Asn/Gln) amidotransferase subunit B.